A 338-amino-acid polypeptide reads, in one-letter code: Ketol-acid reductoisomerase (NADP(+)) (338 aa).

The region spanning 1–181 (MKVFYDKDCD…GGGRAGIIET (181 aa)) is the KARI N-terminal Rossmann domain. Residues 24–27 (YGSQ), Arg47, and Ser52 each bind NADP(+). His107 is an active-site residue. Gly133 is an NADP(+) binding site. The region spanning 182–327 (NFREETETDL…AKLRAMMPWI (146 aa)) is the KARI C-terminal knotted domain. Mg(2+)-binding residues include Asp190, Glu194, Glu226, and Glu230. Ser251 provides a ligand contact to substrate.

It belongs to the ketol-acid reductoisomerase family. Mg(2+) serves as cofactor.

The catalysed reaction is (2R)-2,3-dihydroxy-3-methylbutanoate + NADP(+) = (2S)-2-acetolactate + NADPH + H(+). The enzyme catalyses (2R,3R)-2,3-dihydroxy-3-methylpentanoate + NADP(+) = (S)-2-ethyl-2-hydroxy-3-oxobutanoate + NADPH + H(+). It functions in the pathway amino-acid biosynthesis; L-isoleucine biosynthesis; L-isoleucine from 2-oxobutanoate: step 2/4. Its pathway is amino-acid biosynthesis; L-valine biosynthesis; L-valine from pyruvate: step 2/4. In terms of biological role, involved in the biosynthesis of branched-chain amino acids (BCAA). Catalyzes an alkyl-migration followed by a ketol-acid reduction of (S)-2-acetolactate (S2AL) to yield (R)-2,3-dihydroxy-isovalerate. In the isomerase reaction, S2AL is rearranged via a Mg-dependent methyl migration to produce 3-hydroxy-3-methyl-2-ketobutyrate (HMKB). In the reductase reaction, this 2-ketoacid undergoes a metal-dependent reduction by NADPH to yield (R)-2,3-dihydroxy-isovalerate. The sequence is that of Ketol-acid reductoisomerase (NADP(+)) from Janthinobacterium sp. (strain Marseille) (Minibacterium massiliensis).